The primary structure comprises 740 residues: Ribulose bisphosphate carboxylase, chloroplastic (740 aa).

A chloroplast-targeting transit peptide spans 1–55 (MPSSSFTTGLALGAGALVGANAFVAPTAKTTNLRAPTQEASLQVAASQQTEQPAP). A helical membrane pass occupies residues 56-76 (STSALPWAFGAGACLALAAGG). Residue N213 coordinates substrate. K268 serves as the catalytic Proton acceptor. Position 270 (K270) interacts with substrate. Mg(2+)-binding residues include K293, D295, and E296. The residue at position 293 (K293) is an N6-carboxylysine. H389 serves as the catalytic Proton acceptor. 3 residues coordinate substrate: R390, H423, and S470.

The protein belongs to the RuBisCO large chain family. Type II subfamily. In terms of assembly, homodimer. Mg(2+) serves as cofactor.

The protein resides in the plastid. It localises to the chloroplast membrane. The catalysed reaction is 2 (2R)-3-phosphoglycerate + 2 H(+) = D-ribulose 1,5-bisphosphate + CO2 + H2O. It carries out the reaction D-ribulose 1,5-bisphosphate + O2 = 2-phosphoglycolate + (2R)-3-phosphoglycerate + 2 H(+). RuBisCO catalyzes two reactions: the carboxylation of D-ribulose 1,5-bisphosphate, the primary event in carbon dioxide fixation, as well as the oxidative fragmentation of the pentose substrate. Both reactions occur simultaneously and in competition at the same active site. The polypeptide is Ribulose bisphosphate carboxylase, chloroplastic (rbcL) (Heterocapsa triquetra (Dinoflagellate)).